Reading from the N-terminus, the 415-residue chain is Dihydroorotase (415 aa).

Residues His-54 and His-56 each coordinate Zn(2+). Residues 56 to 58 (HFR) and Asn-88 each bind substrate. Residues Lys-136, His-169, His-217, and Asp-278 each coordinate Zn(2+). The residue at position 136 (Lys-136) is an N6-carboxylysine. Asp-278 is a catalytic residue. His-282 provides a ligand contact to substrate.

Belongs to the metallo-dependent hydrolases superfamily. DHOase family. Class I DHOase subfamily. Requires Zn(2+) as cofactor.

It carries out the reaction (S)-dihydroorotate + H2O = N-carbamoyl-L-aspartate + H(+). Its pathway is pyrimidine metabolism; UMP biosynthesis via de novo pathway; (S)-dihydroorotate from bicarbonate: step 3/3. Functionally, catalyzes the reversible cyclization of carbamoyl aspartate to dihydroorotate. In Thermoplasma volcanium (strain ATCC 51530 / DSM 4299 / JCM 9571 / NBRC 15438 / GSS1), this protein is Dihydroorotase.